The primary structure comprises 1004 residues: 2-oxoglutarate dehydrogenase E1 component (1004 aa).

This sequence belongs to the alpha-ketoglutarate dehydrogenase family. In terms of assembly, homodimer. Part of the 2-oxoglutarate dehydrogenase (OGDH) complex composed of E1 (2-oxoglutarate dehydrogenase), E2 (dihydrolipoamide succinyltransferase) and E3 (dihydrolipoamide dehydrogenase); the complex contains multiple copies of the three enzymatic components (E1, E2 and E3). It depends on thiamine diphosphate as a cofactor.

It catalyses the reaction N(6)-[(R)-lipoyl]-L-lysyl-[protein] + 2-oxoglutarate + H(+) = N(6)-[(R)-S(8)-succinyldihydrolipoyl]-L-lysyl-[protein] + CO2. Functionally, E1 component of the 2-oxoglutarate dehydrogenase (OGDH) complex which catalyzes the decarboxylation of 2-oxoglutarate, the first step in the conversion of 2-oxoglutarate to succinyl-CoA and CO(2). In Brucella abortus (strain S19), this protein is 2-oxoglutarate dehydrogenase E1 component.